The primary structure comprises 161 residues: Immunity protein YezG (161 aa).

In terms of assembly, monomer. Interacts with the C-terminus of cognate toxin YeeF, probably with 2:2 stoichiometry. The second YezG molecules binds with lower affinity.

It is found in the cytoplasm. Its function is as follows. Immunity component of an LXG toxin-immunity module. These modules promote kin selection, mediate competition in biofilms, and drive spatial segregation of different strains, indicating that LXG toxins may help avoid warfare between strains in biofilms. Neutralizes the toxic abilities of cognate toxin YeeF upon expression in E.coli and in vitro. In Bacillus spizizenii (strain ATCC 23059 / NRRL B-14472 / W23) (Bacillus subtilis subsp. spizizenii), this protein is Immunity protein YezG.